A 163-amino-acid chain; its full sequence is Phosphopantetheine adenylyltransferase (163 aa).

Ser-9 serves as a coordination point for substrate. ATP-binding positions include Ser-9–Phe-10 and His-17. Residues Lys-41, Val-78, and Arg-92 each contribute to the substrate site. Residues Gly-93–Arg-95, Glu-103, and Ser-128–Thr-134 contribute to the ATP site.

Belongs to the bacterial CoaD family. In terms of assembly, homohexamer. It depends on Mg(2+) as a cofactor.

It is found in the cytoplasm. The catalysed reaction is (R)-4'-phosphopantetheine + ATP + H(+) = 3'-dephospho-CoA + diphosphate. The protein operates within cofactor biosynthesis; coenzyme A biosynthesis; CoA from (R)-pantothenate: step 4/5. Its function is as follows. Reversibly transfers an adenylyl group from ATP to 4'-phosphopantetheine, yielding dephospho-CoA (dPCoA) and pyrophosphate. This Rhizobium meliloti (strain 1021) (Ensifer meliloti) protein is Phosphopantetheine adenylyltransferase.